We begin with the raw amino-acid sequence, 123 residues long: uncharacterized protein (123 aa).

Residues 17-117 (SNDNAFLVDV…NNQDKGWKQN (101 aa)) form the Rhodanese domain.

This is an uncharacterized protein from Rickettsia conorii (strain ATCC VR-613 / Malish 7).